Reading from the N-terminus, the 105-residue chain is U21-theraphotoxin-Cg1a 4 (105 aa).

The first 21 residues, 1–21, serve as a signal peptide directing secretion; sequence MKVSVLITLAVLGVMFLLTSA. Positions 22–48 are excised as a propeptide; that stretch reads EERGSDQMDSPAWLKSMEIIFQSEERE. Cystine bridges form between C49/C63, C56/C68, and C62/C76. V82 is modified (valine amide). Residues 83-105 constitute a propeptide that is removed on maturation; it reads GKWEMLINMNIFRIVFSYSMCTV.

This sequence belongs to the neurotoxin 10 (Hwtx-1) family. 05 (F4a) subfamily. In terms of tissue distribution, expressed by the venom gland.

Its subcellular location is the secreted. Probable ion channel inhibitor. This Chilobrachys guangxiensis (Chinese earth tiger tarantula) protein is U21-theraphotoxin-Cg1a 4.